The chain runs to 120 residues: Large ribosomal subunit protein bL17 (120 aa).

It belongs to the bacterial ribosomal protein bL17 family. Part of the 50S ribosomal subunit. Contacts protein L32.

The chain is Large ribosomal subunit protein bL17 from Bacillus cereus (strain ATCC 14579 / DSM 31 / CCUG 7414 / JCM 2152 / NBRC 15305 / NCIMB 9373 / NCTC 2599 / NRRL B-3711).